Reading from the N-terminus, the 58-residue chain is Curromycin resistance protein (58 aa).

The disordered stretch occupies residues 1–37 (MSVVALGATSITPPHGPESQGRPFPARGPVRPSARAR). The segment covering 25–37 (PARGPVRPSARAR) has biased composition (low complexity).

This Streptomyces hygroscopicus protein is Curromycin resistance protein (cre).